Here is a 250-residue protein sequence, read N- to C-terminus: Peptidyl-tRNA hydrolase, mitochondrial (250 aa).

A mitochondrion-targeting transit peptide spans 1-45; that stretch reads MRLLSGASASRIPCPLLSLARARARCLPVPASATACRAASSSAAA. Residue Tyr68 coordinates tRNA. Catalysis depends on His73, which acts as the Proton acceptor. Residues Phe118, Asn120, and Asn166 each coordinate tRNA.

The protein belongs to the PTH family.

Its subcellular location is the mitochondrion. It carries out the reaction an N-acyl-L-alpha-aminoacyl-tRNA + H2O = an N-acyl-L-amino acid + a tRNA + H(+). In terms of biological role, the natural substrate for this enzyme may be peptidyl-tRNAs which drop off the ribosome during protein synthesis. This Oryza sativa subsp. japonica (Rice) protein is Peptidyl-tRNA hydrolase, mitochondrial.